A 1663-amino-acid chain; its full sequence is Centrosomal protein of 152 kDa (1663 aa).

A disordered region spans residues 1–60; sequence MSIDFDSGALQTQQEDEEYDKEDYAREQELQQLLTDLPHDMLDDSLSSSPEPSYSDCSGH. The segment covering 44–57 has biased composition (low complexity); that stretch reads DSLSSSPEPSYSDC. Coiled coils occupy residues 266–516, 571–664, 696–796, 843–886, 946–977, 1014–1047, and 1182–1288; these read LQVL…ARLG, ELER…KHLL, QDKK…VTAK, SDCI…VEVA, DFTV…ALLK, RNKL…AERL, and VQQL…KNDM. Disordered stretches follow at residues 1383–1408 and 1595–1628; these read ETTQ…NQNI and KRKD…SDVG. The span at 1603–1613 shows a compositional bias: polar residues; it reads RKYSNKIQEPS.

The protein belongs to the CEP152 family.

It localises to the cytoplasm. The protein localises to the cytoskeleton. It is found in the microtubule organizing center. The protein resides in the centrosome. Its subcellular location is the centriole. In terms of biological role, necessary for centrosome duplication; the function also seems to involve cep63, cdk5rap2 and wdr62 through a stepwise assembled complex at the centrosome that recruits cdk2 required for centriole duplication. Acts as a molecular scaffold facilitating the interaction of plk4 and cpap, 2 molecules involved in centriole formation. Also plays a key role in deuterosome-mediated centriole amplification in multiciliated that can generate more than 100 centrioles. Overexpression of cep152 can drive amplification of centrioles. This Xenopus laevis (African clawed frog) protein is Centrosomal protein of 152 kDa (cep152).